We begin with the raw amino-acid sequence, 222 residues long: Glycerol-3-phosphate acyltransferase (222 aa).

Helical transmembrane passes span 4–24, 56–76, 87–107, 130–150, 153–173, and 174–191; these read ALLL…IPTG, PAAI…VALV, ALPA…VVLG, FMLN…VIFF, IVSL…LALQ, and LPPP…YVIV.

It belongs to the PlsY family. As to quaternary structure, probably interacts with PlsX.

The protein localises to the cell inner membrane. It carries out the reaction an acyl phosphate + sn-glycerol 3-phosphate = a 1-acyl-sn-glycero-3-phosphate + phosphate. Its pathway is lipid metabolism; phospholipid metabolism. Functionally, catalyzes the transfer of an acyl group from acyl-phosphate (acyl-PO(4)) to glycerol-3-phosphate (G3P) to form lysophosphatidic acid (LPA). This enzyme utilizes acyl-phosphate as fatty acyl donor, but not acyl-CoA or acyl-ACP. This Synechocystis sp. (strain ATCC 27184 / PCC 6803 / Kazusa) protein is Glycerol-3-phosphate acyltransferase.